We begin with the raw amino-acid sequence, 392 residues long: 2,3-bisphosphoglycerate-independent phosphoglycerate mutase (392 aa).

This sequence belongs to the BPG-independent phosphoglycerate mutase family. A-PGAM subfamily.

It catalyses the reaction (2R)-2-phosphoglycerate = (2R)-3-phosphoglycerate. The protein operates within carbohydrate degradation; glycolysis; pyruvate from D-glyceraldehyde 3-phosphate: step 3/5. Functionally, catalyzes the interconversion of 2-phosphoglycerate and 3-phosphoglycerate. In Methanothrix thermoacetophila (strain DSM 6194 / JCM 14653 / NBRC 101360 / PT) (Methanosaeta thermophila), this protein is 2,3-bisphosphoglycerate-independent phosphoglycerate mutase.